A 117-amino-acid polypeptide reads, in one-letter code: Putative pterin-4-alpha-carbinolamine dehydratase (117 aa).

It belongs to the pterin-4-alpha-carbinolamine dehydratase family.

The enzyme catalyses (4aS,6R)-4a-hydroxy-L-erythro-5,6,7,8-tetrahydrobiopterin = (6R)-L-erythro-6,7-dihydrobiopterin + H2O. This is Putative pterin-4-alpha-carbinolamine dehydratase from Azoarcus sp. (strain BH72).